The chain runs to 510 residues: NAD(P)H-quinone oxidoreductase subunit 2 A, chloroplastic (510 aa).

The next 12 helical transmembrane spans lie at 24–44 (LLLF…GLIL), 59–79 (WFYF…LFRW), 99–119 (IFQF…VEYI), 124–144 (MAIT…MFLC), 149–169 (LITL…LSGY), 183–203 (YLLM…WLYG), 229–249 (ISIA…PAPF), 295–315 (WHLL…LIAI), 323–343 (MLAY…IVGD), 354–374 (YMLF…SFGL), 395–415 (ALSL…AGFF), and 418–438 (LHLF…IGLL).

Belongs to the complex I subunit 2 family. In terms of assembly, NDH is composed of at least 16 different subunits, 5 of which are encoded in the nucleus.

It localises to the plastid. It is found in the chloroplast thylakoid membrane. The enzyme catalyses a plastoquinone + NADH + (n+1) H(+)(in) = a plastoquinol + NAD(+) + n H(+)(out). It catalyses the reaction a plastoquinone + NADPH + (n+1) H(+)(in) = a plastoquinol + NADP(+) + n H(+)(out). Its function is as follows. NDH shuttles electrons from NAD(P)H:plastoquinone, via FMN and iron-sulfur (Fe-S) centers, to quinones in the photosynthetic chain and possibly in a chloroplast respiratory chain. The immediate electron acceptor for the enzyme in this species is believed to be plastoquinone. Couples the redox reaction to proton translocation, and thus conserves the redox energy in a proton gradient. The polypeptide is NAD(P)H-quinone oxidoreductase subunit 2 A, chloroplastic (Dioscorea elephantipes (Elephant's foot yam)).